Consider the following 449-residue polypeptide: GTPase Der (449 aa).

EngA-type G domains lie at 3–167 and 175–350; these read SIVA…PDEP and TNIA…EQYS. Residues 9–16, 56–60, 119–122, 181–188, 228–232, and 293–296 each bind GTP; these read GRPNVGKS, DTGGF, NKVD, DTAGI, and NKWD. The KH-like domain occupies 351–435; the sequence is RRVTTSELNR…PFRLLFRGRE (85 aa).

This sequence belongs to the TRAFAC class TrmE-Era-EngA-EngB-Septin-like GTPase superfamily. EngA (Der) GTPase family. As to quaternary structure, associates with the 50S ribosomal subunit.

In terms of biological role, GTPase that plays an essential role in the late steps of ribosome biogenesis. The protein is GTPase Der of Trichlorobacter lovleyi (strain ATCC BAA-1151 / DSM 17278 / SZ) (Geobacter lovleyi).